The chain runs to 103 residues: Putative truncated guanine nucleotide exchange factor YLL017W (103 aa).

An SH3 domain is found at 26-97 (QPIDVVECTY…PPSFYTVHSK (72 aa)).

In Saccharomyces cerevisiae (strain ATCC 204508 / S288c) (Baker's yeast), this protein is Putative truncated guanine nucleotide exchange factor YLL017W.